We begin with the raw amino-acid sequence, 284 residues long: 2-dehydro-3-deoxyphosphooctonate aldolase (284 aa).

This sequence belongs to the KdsA family.

Its subcellular location is the cytoplasm. It catalyses the reaction D-arabinose 5-phosphate + phosphoenolpyruvate + H2O = 3-deoxy-alpha-D-manno-2-octulosonate-8-phosphate + phosphate. The protein operates within carbohydrate biosynthesis; 3-deoxy-D-manno-octulosonate biosynthesis; 3-deoxy-D-manno-octulosonate from D-ribulose 5-phosphate: step 2/3. It participates in bacterial outer membrane biogenesis; lipopolysaccharide biosynthesis. The protein is 2-dehydro-3-deoxyphosphooctonate aldolase of Paraburkholderia phymatum (strain DSM 17167 / CIP 108236 / LMG 21445 / STM815) (Burkholderia phymatum).